The primary structure comprises 214 residues: ATP-dependent Clp protease proteolytic subunit (214 aa).

The active-site Nucleophile is Ser-106. Residue His-131 is part of the active site.

Belongs to the peptidase S14 family. Fourteen ClpP subunits assemble into 2 heptameric rings which stack back to back to give a disk-like structure with a central cavity, resembling the structure of eukaryotic proteasomes.

It localises to the cytoplasm. The enzyme catalyses Hydrolysis of proteins to small peptides in the presence of ATP and magnesium. alpha-casein is the usual test substrate. In the absence of ATP, only oligopeptides shorter than five residues are hydrolyzed (such as succinyl-Leu-Tyr-|-NHMec, and Leu-Tyr-Leu-|-Tyr-Trp, in which cleavage of the -Tyr-|-Leu- and -Tyr-|-Trp bonds also occurs).. Cleaves peptides in various proteins in a process that requires ATP hydrolysis. Has a chymotrypsin-like activity. Plays a major role in the degradation of misfolded proteins. This Rhodopseudomonas palustris (strain BisB5) protein is ATP-dependent Clp protease proteolytic subunit.